Consider the following 858-residue polypeptide: DNA mismatch repair protein MutS (858 aa).

Residue 613-620 participates in ATP binding; it reads GPNMAGKS.

The protein belongs to the DNA mismatch repair MutS family.

Its function is as follows. This protein is involved in the repair of mismatches in DNA. It is possible that it carries out the mismatch recognition step. This protein has a weak ATPase activity. This chain is DNA mismatch repair protein MutS, found in Dehalococcoides mccartyi (strain ATCC BAA-2266 / KCTC 15142 / 195) (Dehalococcoides ethenogenes (strain 195)).